The following is a 215-amino-acid chain: Thiamine-phosphate synthase 1 (215 aa).

4-amino-2-methyl-5-(diphosphooxymethyl)pyrimidine-binding positions include 35–39 (QYRFE) and Asn-67. Positions 68 and 87 each coordinate Mg(2+). Thr-106 contributes to the 4-amino-2-methyl-5-(diphosphooxymethyl)pyrimidine binding site. Residue 132–134 (TST) coordinates 2-[(2R,5Z)-2-carboxy-4-methylthiazol-5(2H)-ylidene]ethyl phosphate. Residue Lys-135 coordinates 4-amino-2-methyl-5-(diphosphooxymethyl)pyrimidine. Gly-162 contributes to the 2-[(2R,5Z)-2-carboxy-4-methylthiazol-5(2H)-ylidene]ethyl phosphate binding site.

Belongs to the thiamine-phosphate synthase family. The cofactor is Mg(2+).

The catalysed reaction is 2-[(2R,5Z)-2-carboxy-4-methylthiazol-5(2H)-ylidene]ethyl phosphate + 4-amino-2-methyl-5-(diphosphooxymethyl)pyrimidine + 2 H(+) = thiamine phosphate + CO2 + diphosphate. It catalyses the reaction 2-(2-carboxy-4-methylthiazol-5-yl)ethyl phosphate + 4-amino-2-methyl-5-(diphosphooxymethyl)pyrimidine + 2 H(+) = thiamine phosphate + CO2 + diphosphate. It carries out the reaction 4-methyl-5-(2-phosphooxyethyl)-thiazole + 4-amino-2-methyl-5-(diphosphooxymethyl)pyrimidine + H(+) = thiamine phosphate + diphosphate. It participates in cofactor biosynthesis; thiamine diphosphate biosynthesis; thiamine phosphate from 4-amino-2-methyl-5-diphosphomethylpyrimidine and 4-methyl-5-(2-phosphoethyl)-thiazole: step 1/1. Condenses 4-methyl-5-(beta-hydroxyethyl)thiazole monophosphate (THZ-P) and 2-methyl-4-amino-5-hydroxymethyl pyrimidine pyrophosphate (HMP-PP) to form thiamine monophosphate (TMP). The sequence is that of Thiamine-phosphate synthase 1 from Aquifex aeolicus (strain VF5).